Here is a 265-residue protein sequence, read N- to C-terminus: Mlc titration factor A (265 aa).

Histidine 111, histidine 148, histidine 152, and glutamate 211 together coordinate Zn(2+).

This sequence belongs to the MtfA family. Interacts with Mlc. Zn(2+) serves as cofactor.

The protein localises to the cytoplasm. In terms of biological role, involved in the modulation of the activity of the glucose-phosphotransferase system (glucose-PTS). Interacts with the transcriptional repressor Mlc, preventing its interaction with DNA and leading to the modulation of expression of genes regulated by Mlc, including ptsG, which encodes the PTS system glucose-specific EIICB component. Its function is as follows. Shows zinc-dependent metallopeptidase activity. The polypeptide is Mlc titration factor A (Escherichia fergusonii (strain ATCC 35469 / DSM 13698 / CCUG 18766 / IAM 14443 / JCM 21226 / LMG 7866 / NBRC 102419 / NCTC 12128 / CDC 0568-73)).